A 265-amino-acid chain; its full sequence is 3-methyl-2-oxobutanoate hydroxymethyltransferase (265 aa).

Residues aspartate 45 and aspartate 84 each coordinate Mg(2+). 3-methyl-2-oxobutanoate contacts are provided by residues 45–46 (DS), aspartate 84, and lysine 112. Glutamate 114 is a Mg(2+) binding site. Glutamate 182 (proton acceptor) is an active-site residue.

Belongs to the PanB family. Homodecamer; pentamer of dimers. Mg(2+) is required as a cofactor.

The protein resides in the cytoplasm. The enzyme catalyses 3-methyl-2-oxobutanoate + (6R)-5,10-methylene-5,6,7,8-tetrahydrofolate + H2O = 2-dehydropantoate + (6S)-5,6,7,8-tetrahydrofolate. Its pathway is cofactor biosynthesis; (R)-pantothenate biosynthesis; (R)-pantoate from 3-methyl-2-oxobutanoate: step 1/2. Functionally, catalyzes the reversible reaction in which hydroxymethyl group from 5,10-methylenetetrahydrofolate is transferred onto alpha-ketoisovalerate to form ketopantoate. The polypeptide is 3-methyl-2-oxobutanoate hydroxymethyltransferase (Baumannia cicadellinicola subsp. Homalodisca coagulata).